The following is a 400-amino-acid chain: Enoyl-[acyl-carrier-protein] reductase [NADH] (400 aa).

NAD(+)-binding positions include 48-53, 74-75, 111-112, and 139-140; these read GSSSGY, FE, DA, and LA. A substrate-binding site is contributed by tyrosine 225. Tyrosine 235 functions as the Proton donor in the catalytic mechanism. Residues lysine 244 and 273–275 contribute to the NAD(+) site; that span reads VVT.

It belongs to the TER reductase family. Monomer.

It carries out the reaction a 2,3-saturated acyl-[ACP] + NAD(+) = a (2E)-enoyl-[ACP] + NADH + H(+). It participates in lipid metabolism; fatty acid biosynthesis. In terms of biological role, involved in the final reduction of the elongation cycle of fatty acid synthesis (FAS II). Catalyzes the reduction of a carbon-carbon double bond in an enoyl moiety that is covalently linked to an acyl carrier protein (ACP). The polypeptide is Enoyl-[acyl-carrier-protein] reductase [NADH] (Shewanella baltica (strain OS223)).